Here is a 77-residue protein sequence, read N- to C-terminus: uncharacterized protein (77 aa).

The region spanning 1–77 is the Peptidase A1 domain; that stretch reads MAFERQGKIE…VAILDGKLVW (77 aa).

This is an uncharacterized protein from Saccharomyces cerevisiae (strain ATCC 204508 / S288c) (Baker's yeast).